We begin with the raw amino-acid sequence, 236 residues long: uncharacterized protein (236 aa).

A disordered region spans residues 217 to 236 (GESPDNVVRGEGGFGSTGGH). The segment covering 226–236 (GEGGFGSTGGH) has biased composition (gly residues).

This is an uncharacterized protein from Ostreid herpesvirus 1 (isolate France) (OsHV-1).